The sequence spans 455 residues: tRNA modification GTPase MnmE (455 aa).

Residues R24, E81, and K121 each coordinate (6S)-5-formyl-5,6,7,8-tetrahydrofolate. Residues 217–378 (GMKVVIAGRP…LREHLKDCMG (162 aa)) enclose the TrmE-type G domain. Residue N227 participates in K(+) binding. GTP is bound by residues 227–232 (NAGKSS), 246–252 (TDIAGTT), 271–274 (DTAG), and 359–361 (SAR). S231 is a binding site for Mg(2+). 3 residues coordinate K(+): T246, I248, and T251. T252 lines the Mg(2+) pocket. Residue K455 participates in (6S)-5-formyl-5,6,7,8-tetrahydrofolate binding.

Belongs to the TRAFAC class TrmE-Era-EngA-EngB-Septin-like GTPase superfamily. TrmE GTPase family. As to quaternary structure, homodimer. Heterotetramer of two MnmE and two MnmG subunits. K(+) is required as a cofactor.

The protein localises to the cytoplasm. Exhibits a very high intrinsic GTPase hydrolysis rate. Involved in the addition of a carboxymethylaminomethyl (cmnm) group at the wobble position (U34) of certain tRNAs, forming tRNA-cmnm(5)s(2)U34. The chain is tRNA modification GTPase MnmE from Photobacterium profundum (strain SS9).